The chain runs to 253 residues: Putative glutamine amidotransferase PB2B2.05 (253 aa).

A Glutamine amidotransferase type-1 domain is found at 5 to 228 (IIALSVGFSN…INRSKWHMKQ (224 aa)). C100 acts as the Nucleophile in catalysis. Residues H200 and E202 contribute to the active site.

The protein resides in the cytoplasm. Its subcellular location is the nucleus. In Schizosaccharomyces pombe (strain 972 / ATCC 24843) (Fission yeast), this protein is Putative glutamine amidotransferase PB2B2.05.